We begin with the raw amino-acid sequence, 122 residues long: Fluoride-specific ion channel FluC (122 aa).

Helical transmembrane passes span 1–21 (MYAF…RHYL), 35–55 (WAIL…SAYL), 67–87 (FLLT…LNLI), and 98–118 (FLNL…GFWL). 2 residues coordinate Na(+): Gly74 and Thr77.

It belongs to the fluoride channel Fluc/FEX (TC 1.A.43) family.

The protein localises to the cell inner membrane. It catalyses the reaction fluoride(in) = fluoride(out). Its activity is regulated as follows. Na(+) is not transported, but it plays an essential structural role and its presence is essential for fluoride channel function. In terms of biological role, fluoride-specific ion channel. Important for reducing fluoride concentration in the cell, thus reducing its toxicity. This Dichelobacter nodosus (strain VCS1703A) protein is Fluoride-specific ion channel FluC.